Reading from the N-terminus, the 591-residue chain is L-fucose isomerase (591 aa).

Active-site proton acceptor residues include glutamate 337 and aspartate 361. 3 residues coordinate Mn(2+): glutamate 337, aspartate 361, and histidine 528.

The protein belongs to the L-fucose isomerase family. In terms of assembly, homohexamer. It depends on Mn(2+) as a cofactor.

It is found in the cytoplasm. It catalyses the reaction L-fucose = L-fuculose. It participates in carbohydrate degradation; L-fucose degradation; L-lactaldehyde and glycerone phosphate from L-fucose: step 1/3. Converts the aldose L-fucose into the corresponding ketose L-fuculose. The protein is L-fucose isomerase of Escherichia coli O17:K52:H18 (strain UMN026 / ExPEC).